Here is a 335-residue protein sequence, read N- to C-terminus: Ig gamma-2A chain C region secreted form (335 aa).

Ig-like domains lie at 6-98 (PSVY…KKIE), 126-225 (PSVF…KTIS), and 234-330 (PQVY…KTIS). N-linked (GlcNAc...) asparagine glycosylation occurs at Asn185.

The protein localises to the secreted. This chain is Ig gamma-2A chain C region secreted form, found in Mus musculus (Mouse).